Consider the following 641-residue polypeptide: Macrolide export ATP-binding/permease protein MacB (641 aa).

The 239-residue stretch at 2-240 folds into the ABC transporter domain; sequence IKLENIKKSF…LKQNLKEIKP (239 aa). 38 to 45 contributes to the ATP binding site; sequence GQSGSGKS. 4 consecutive transmembrane segments (helical) span residues 268 to 288, 516 to 536, 565 to 585, and 601 to 621; these read FLTM…VALA, LLIS…VMNI, FLIE…GLAY, and IFST…GIVF.

Belongs to the ABC transporter superfamily. Macrolide exporter (TC 3.A.1.122) family. As to quaternary structure, homodimer.

Its subcellular location is the cell inner membrane. Its function is as follows. Non-canonical ABC transporter that contains transmembrane domains (TMD), which form a pore in the inner membrane, and an ATP-binding domain (NBD), which is responsible for energy generation. Confers resistance against macrolides. This chain is Macrolide export ATP-binding/permease protein MacB, found in Campylobacter fetus subsp. fetus (strain 82-40).